The following is a 455-amino-acid chain: Probable glycine dehydrogenase (decarboxylating) subunit 1 (455 aa).

This sequence belongs to the GcvP family. N-terminal subunit subfamily. As to quaternary structure, the glycine cleavage system is composed of four proteins: P, T, L and H. In this organism, the P 'protein' is a heterodimer of two subunits.

It catalyses the reaction N(6)-[(R)-lipoyl]-L-lysyl-[glycine-cleavage complex H protein] + glycine + H(+) = N(6)-[(R)-S(8)-aminomethyldihydrolipoyl]-L-lysyl-[glycine-cleavage complex H protein] + CO2. Its function is as follows. The glycine cleavage system catalyzes the degradation of glycine. The P protein binds the alpha-amino group of glycine through its pyridoxal phosphate cofactor; CO(2) is released and the remaining methylamine moiety is then transferred to the lipoamide cofactor of the H protein. The chain is Probable glycine dehydrogenase (decarboxylating) subunit 1 from Francisella tularensis subsp. holarctica (strain LVS).